Here is a 327-residue protein sequence, read N- to C-terminus: Glycerol-3-phosphate dehydrogenase [NAD(P)+] (327 aa).

Serine 10, phenylalanine 11, arginine 31, and lysine 108 together coordinate NADPH. Residues lysine 108, glycine 136, and serine 138 each coordinate sn-glycerol 3-phosphate. Alanine 140 lines the NADPH pocket. Sn-glycerol 3-phosphate is bound by residues lysine 191, aspartate 246, serine 256, arginine 257, and asparagine 258. Lysine 191 acts as the Proton acceptor in catalysis. Position 257 (arginine 257) interacts with NADPH. NADPH contacts are provided by leucine 281 and glutamate 283.

It belongs to the NAD-dependent glycerol-3-phosphate dehydrogenase family.

It localises to the cytoplasm. The catalysed reaction is sn-glycerol 3-phosphate + NAD(+) = dihydroxyacetone phosphate + NADH + H(+). It catalyses the reaction sn-glycerol 3-phosphate + NADP(+) = dihydroxyacetone phosphate + NADPH + H(+). It participates in membrane lipid metabolism; glycerophospholipid metabolism. Functionally, catalyzes the reduction of the glycolytic intermediate dihydroxyacetone phosphate (DHAP) to sn-glycerol 3-phosphate (G3P), the key precursor for phospholipid synthesis. In Ehrlichia ruminantium (strain Welgevonden), this protein is Glycerol-3-phosphate dehydrogenase [NAD(P)+].